The primary structure comprises 724 residues: Degenerin mec-10 (724 aa).

The Cytoplasmic portion of the chain corresponds to 1–125; the sequence is MNRGPPNPRM…GQAPNSLYRA (125 aa). The chain crosses the membrane as a helical span at residues 126 to 146; sequence VWVFLLLICAIQFINQAVAVI. Residues 147-684 lie on the Extracellular side of the membrane; it reads QKYQKMDKIT…FGGHLGLWSG (538 aa). N-linked (GlcNAc...) asparagine glycosylation is found at Asn294, Asn370, Asn463, Asn605, and Asn624. The chain crosses the membrane as a helical span at residues 685 to 705; the sequence is VSVMTCCEFVCLVLELLYMAV. At 706 to 724 the chain is on the cytoplasmic side; that stretch reads THHITQERIRRRENAANEF.

The protein belongs to the amiloride-sensitive sodium channel (TC 1.A.6) family. As to quaternary structure, the channel is probably composed of at least the mec-2, mec-4, mec-6 and mec-10 subunits.

The protein resides in the cell membrane. Functionally, amiloride-sensitive sodium channel subunit required for mechanosensory transduction (touch sensitivity). Negatively regulates the turning step of male mating behavior. The chain is Degenerin mec-10 from Caenorhabditis briggsae.